The primary structure comprises 202 residues: Recombination protein RecR (202 aa).

The segment at 61–76 adopts a C4-type zinc-finger fold; the sequence is CARCNSFTEDEVCATC. A Toprim domain is found at 84 to 179; it reads GLLCIVETPA…KVTRLARGVP (96 aa).

The protein belongs to the RecR family.

In terms of biological role, may play a role in DNA repair. It seems to be involved in an RecBC-independent recombinational process of DNA repair. It may act with RecF and RecO. The protein is Recombination protein RecR of Bordetella pertussis (strain Tohama I / ATCC BAA-589 / NCTC 13251).